The sequence spans 299 residues: MDLFPPKFSKVLVTPDPQYIPGYAGYCPQLKYHVGQTYGQLTAKLLTSPEVSHSQRLVLQTSPLSSTEKETASRSQIWWSRHGASRNLETMIPGYTGFVPLRQNYICKTYAETCRDALSEFNQGQAKRLHNASADLSFPVINSVPDFRPRRSNSPLIALSKDPAPYKAPDPWKPPGSPYFMEDSSPHKYFISGFTGYVPKARFLFGTGYPTITNKALIQFSKEMKAGPASLQKYSLQEEDSSNLPLIPTIYPSKTGLLPSYTGHIPGYRFQYGHTFGKLTHNALGHTASQKNAGAIRLS.

This sequence belongs to the CIMIP2 family. As to expression, expressed in airway epithelial cells.

It localises to the cytoplasm. The protein resides in the cytoskeleton. It is found in the cilium axoneme. Its function is as follows. Microtubule inner protein (MIP) part of the dynein-decorated doublet microtubules (DMTs) in cilia axoneme, which is required for motile cilia beating. The sequence is that of Ciliary microtubule inner protein 2B (cimip2b) from Danio rerio (Zebrafish).